A 233-amino-acid polypeptide reads, in one-letter code: uncharacterized protein (233 aa).

The first 23 residues, 1–23, serve as a signal peptide directing secretion; it reads MEIKYFLVLLVGFLLVLPSIVNP. Residues 42–217 are disordered; the sequence is LDVNNPHNPN…HHHHQEASEC (176 aa). Over residues 45–64 the composition is skewed to low complexity; sequence NNPHNPNNNPHNPHNPNNNP. Residues 65 to 211 show a composition bias toward basic residues; it reads HHPHHLHHHH…HPHPHHHHHH (147 aa).

Its subcellular location is the secreted. This is an uncharacterized protein from Dictyostelium discoideum (Social amoeba).